A 372-amino-acid polypeptide reads, in one-letter code: Fatty acid conjugase FAC2 B (372 aa).

The next 2 helical transmembrane spans lie at 44 to 64 (YFLF…SNYI) and 74 to 94 (IVWP…WMIG). The Histidine box-1 motif lies at 95–99 (HECGH). Positions 131-135 (HRNHH) match the Histidine box-2 motif. 3 helical membrane-spanning segments follow: residues 166–186 (IGLM…YIMF), 217–237 (VLFS…IVTV), and 240–260 (AMPA…ILFA). A Histidine box-3 motif is present at residues 304–308 (HVIHH).

The protein belongs to the fatty acid desaturase type 1 family. As to expression, expressed exclusively in the developing seeds. Not detected in leaves.

The protein resides in the microsome membrane. The catalysed reaction is a (9Z,12Z)-octadecadienoyl-containing glycerolipid + AH2 + O2 = a (8E,10E,12Z)-octadecatrienoyl-containing glycerolipid + A + 2 H2O. It participates in lipid metabolism; polyunsaturated fatty acid biosynthesis. Functionally, fatty acid conjugase converting 18:2(9Z, 12Z) to calendic acid 18:3(8E, 10E, 12Z). Converts alpha-linolenic acid (18:3(9Z, 12Z, 15Z)) into 18:4(8E, 10E, 12Z, 15Z). Also has weak activity on the mono-unsaturates 16:1(9Z) and 18:1(9Z) producing two conjugated double bonds at delta(8) and delta(10) position. This is Fatty acid conjugase FAC2 B from Calendula officinalis (Pot marigold).